Consider the following 253-residue polypeptide: Sulfoacetaldehyde reductase (253 aa).

Position 6-30 (6-30 (FITGATSGFGRAAAHRFAAAGWSLV)) interacts with NADP(+). Position 139 (Ser-139) interacts with substrate. Residue Tyr-152 is the Proton acceptor of the active site.

It belongs to the short-chain dehydrogenases/reductases (SDR) family. Homodimer and heterotetramer.

It catalyses the reaction 2-hydroxyethane-1-sulfonate + NADP(+) = sulfoacetaldehyde + NADPH + H(+). It functions in the pathway organosulfur degradation. Functionally, catalyzes the formation of isethionate from 2-sulfoacetaldehyde in the deaminative pathway of taurine. The enzyme is specific for NADPH; NADH is not a substrate. Responsible for most of the activity observed in taurine-grown cells. The chain is Sulfoacetaldehyde reductase (isfD) from Chromohalobacter salexigens (strain ATCC BAA-138 / DSM 3043 / CIP 106854 / NCIMB 13768 / 1H11).